A 720-amino-acid chain; its full sequence is Putative glutamine--fructose-6-phosphate aminotransferase [isomerizing] (720 aa).

Catalysis depends on Cys-2, which acts as the Nucleophile; for GATase activity. Residues 2 to 321 (CGIFGYCNFL…DNDTAHIYDG (320 aa)) enclose the Glutamine amidotransferase type-2 domain. Polar residues predominate over residues 266–280 (STTSTFNHGSSTETP). The interval 266-285 (STTSTFNHGSSTETPAENGL) is disordered. SIS domains follow at residues 393-532 (WLTE…DLVS) and 565-710 (CDKK…VDLP).

It carries out the reaction D-fructose 6-phosphate + L-glutamine = D-glucosamine 6-phosphate + L-glutamate. Its pathway is nucleotide-sugar biosynthesis; UDP-N-acetyl-alpha-D-glucosamine biosynthesis; alpha-D-glucosamine 6-phosphate from D-fructose 6-phosphate: step 1/1. Its function is as follows. Involved in amino sugar synthesis (formation of chitin, supplies the amino sugars of asparagine-linked oligosaccharides of glycoproteins). The polypeptide is Putative glutamine--fructose-6-phosphate aminotransferase [isomerizing] (Saccharomyces cerevisiae (strain JAY291) (Baker's yeast)).